Reading from the N-terminus, the 39-residue chain is SPbeta prophage-derived membrane protein YosA (39 aa).

The chain crosses the membrane as a helical span at residues 19 to 39 (SFVLIVVLFILLIIVGATFLY).

The protein belongs to the SscA family.

It is found in the membrane. This chain is SPbeta prophage-derived membrane protein YosA (yosA), found in Bacillus subtilis (strain 168).